The primary structure comprises 439 residues: NAD kinase (439 aa).

Phosphoserine is present on residues serine 46, serine 48, serine 50, serine 55, and serine 64.

This sequence belongs to the NAD kinase family. A divalent metal cation is required as a cofactor.

The enzyme catalyses NAD(+) + ATP = ADP + NADP(+) + H(+). The chain is NAD kinase (Nadk) from Mus musculus (Mouse).